Consider the following 504-residue polypeptide: ATP synthase subunit alpha (504 aa).

171–178 is a binding site for ATP; sequence GDRQTGKT.

Belongs to the ATPase alpha/beta chains family. F-type ATPases have 2 components, CF(1) - the catalytic core - and CF(0) - the membrane proton channel. CF(1) has five subunits: alpha(3), beta(3), gamma(1), delta(1), epsilon(1). CF(0) has three main subunits: a(1), b(2) and c(9-12). The alpha and beta chains form an alternating ring which encloses part of the gamma chain. CF(1) is attached to CF(0) by a central stalk formed by the gamma and epsilon chains, while a peripheral stalk is formed by the delta and b chains.

It is found in the cell inner membrane. It catalyses the reaction ATP + H2O + 4 H(+)(in) = ADP + phosphate + 5 H(+)(out). In terms of biological role, produces ATP from ADP in the presence of a proton gradient across the membrane. The alpha chain is a regulatory subunit. The polypeptide is ATP synthase subunit alpha (Helicobacter hepaticus (strain ATCC 51449 / 3B1)).